Reading from the N-terminus, the 792-residue chain is MASVAESSFPLLCQIKTQRRINSSTLRHSRVSYHDLPSGSLSFRSRSFVLGHRCKCVSRVEASGSDDDEPEDALQATIDKSKKVLAMQRNLLHQIAERRKLVSSIKESTPDLDDAKASSKQESASSVNANTDATKKEIMDGDANGSVSPSTYGKSSLSKEPEAKTFSPSTESLKNRKQSSASVISSSPVTSPQKPSDVATNGKPWSSVVASSVDPPYKPSSVMTSPEKTSDPVTSPGKPSKSRAGAFWSDPLPSYLTKAPQTSTMKTEKYVEKTPDVASSETNEPGKDEEKPPPLAGANVMNVILVAAECAPFSKTGGLGDVAGALPKSLARRGHRVMVVVPRYAEYAEAKDLGVRKRYKVAGQDMEVMYFHAFIDGVDFVFIDSPEFRHLSNNIYGGNRLDILKRMVLFCKAAVEVPWYVPCGGVCYGDGNLAFIANDWHTALLPVYLKAYYRDHGIMKYTRSVLVIHNIAHQGRGPVDDFSYVDLPSHYLDSFKLYDPVGGEHFNIFAAGLKAADRVLTVSHGYSWEVKTLEGGWGLHNIINENDWKFRGIVNGIDTQEWNPEFDTYLHSDDYTNYSLENLHIGKPQCKAALQKELGLPVRPDVPLIGFIGRLDHQKGVDLIAEAVPWMMSQDVQLVMLGTGRPDLEEVLRQMEHQYRDKARGWVGFSVKTAHRITAGADILLMPSRFEPCGLNQLYAMNYGTIPVVHAVGGLRDTVQQFDPYSETGLGWTFDSAEAGKLIHALGNCLLTYREYKESWEGLQRRGMTQDLSWDNAAEKYEEVLVAAKYHW.

A chloroplast-targeting transit peptide spans 1-55 (MASVAESSFPLLCQIKTQRRINSSTLRHSRVSYHDLPSGSLSFRSRSFVLGHRCK). The disordered stretch occupies residues 105 to 295 (IKESTPDLDD…GKDEEKPPPL (191 aa)). Positions 145–156 (GSVSPSTYGKSS) are enriched in polar residues. Positions 179 to 192 (SSASVISSSPVTSP) are enriched in low complexity. The span at 221–233 (SVMTSPEKTSDPV) shows a compositional bias: polar residues. The span at 266-275 (KTEKYVEKTP) shows a compositional bias: basic and acidic residues. Residue Lys315 participates in ADP-alpha-D-glucose binding.

This sequence belongs to the glycosyltransferase 1 family. Bacterial/plant glycogen synthase subfamily. Expressed in roots, leaves and flowers.

It localises to the plastid. The protein localises to the chloroplast. The protein resides in the amyloplast. It catalyses the reaction [(1-&gt;4)-alpha-D-glucosyl](n) + ADP-alpha-D-glucose = [(1-&gt;4)-alpha-D-glucosyl](n+1) + ADP + H(+). It functions in the pathway glycan biosynthesis; starch biosynthesis. In terms of biological role, involved in the synthesis of glycan chains within amylopectin in leaves. Is required to produce chains with a degree of polymerization of 12 to 25 (DP12-DP25). The sequence is that of Starch synthase 2, chloroplastic/amyloplastic (SS2) from Arabidopsis thaliana (Mouse-ear cress).